Here is a 652-residue protein sequence, read N- to C-terminus: Oligopeptide-binding protein AliB (652 aa).

Residues 1 to 24 (MKKSKSKYLTLAGLVLGTGVLLSA) form the signal peptide. Cys-25 carries the N-palmitoyl cysteine lipid modification. A lipid anchor (S-diacylglycerol cysteine) is attached at Cys-25.

The protein belongs to the bacterial solute-binding protein 5 family.

Its subcellular location is the cell membrane. In terms of biological role, part of the binding-protein-dependent transport system for oligopeptides; probably an oligopeptide binding protein. In Streptococcus pneumoniae serotype 4 (strain ATCC BAA-334 / TIGR4), this protein is Oligopeptide-binding protein AliB (aliB).